A 147-amino-acid polypeptide reads, in one-letter code: Ponticulin-like protein C4 (147 aa).

A signal peptide spans M1–A20. N118 is lipidated: GPI-like-anchor amidated asparagine. N118 carries N-linked (GlcNAc...) asparagine glycosylation. The propeptide at S119–L147 is removed in mature form.

This sequence belongs to the ponticulin family. The GPI-like-anchor contains a phosphoceramide group, rather than a phosphatidyl group.

The protein resides in the cell membrane. The polypeptide is Ponticulin-like protein C4 (ponC4) (Dictyostelium discoideum (Social amoeba)).